Here is an 83-residue protein sequence, read N- to C-terminus: Small ribosomal subunit protein bS16 (83 aa).

Belongs to the bacterial ribosomal protein bS16 family.

The protein is Small ribosomal subunit protein bS16 of Pseudomonas fluorescens (strain Pf0-1).